The following is a 998-amino-acid chain: Protein Smaug (998 aa).

Residues 1–37 (MKYATGTDNAMTSGISGQTNSSNSASNEMQPTTSTPT) are compositionally biased toward polar residues. 3 disordered regions span residues 1–45 (MKYA…EATS), 50–69 (TATY…QSQP), and 329–370 (LCPA…GSSS). Positions 329 to 338 (LCPASGSRSS) are enriched in low complexity. Ser-564 and Ser-575 each carry phosphoserine. Residues 583-763 (EFKPNYIKFH…KDLKFKLSKM (181 aa)) form an interaction with cup region. Positions 600–654 (GIGLWLKSLRLHKYIELFKNMTYEEMLLITEDFLQSVGVTKGASHKLALCIDKLK) constitute an SAM domain. 2 disordered regions span residues 773-892 (HVKP…MQQM) and 943-977 (NGSN…QQPK). 2 stretches are compositionally biased toward polar residues: residues 801–822 (KSGS…NFSL) and 854–864 (HQPQYKSSSYP). Ser-971 carries the phosphoserine modification.

Belongs to the SMAUG family. As to quaternary structure, interacts with oskar (osk). Binds to the 3'-UTR of nos. Interacts with cup, which in turn recruits eIF4-E, leading to an indirect interaction between smg and eIF4-E that prevents mRNA translation.

It localises to the cytoplasm. Functionally, translation regulator that binds to the 3'-UTR of specific mRNAs such as nanos (nos) and prevent their translation. Prevents translation of unlocalized nos in the bulk cytoplasm via the recruitment of cup. The sequence is that of Protein Smaug from Drosophila sechellia (Fruit fly).